The following is a 204-amino-acid chain: ATP phosphoribosyltransferase (204 aa).

The protein belongs to the ATP phosphoribosyltransferase family. Short subfamily. As to quaternary structure, heteromultimer composed of HisG and HisZ subunits.

The protein localises to the cytoplasm. The catalysed reaction is 1-(5-phospho-beta-D-ribosyl)-ATP + diphosphate = 5-phospho-alpha-D-ribose 1-diphosphate + ATP. The protein operates within amino-acid biosynthesis; L-histidine biosynthesis; L-histidine from 5-phospho-alpha-D-ribose 1-diphosphate: step 1/9. In terms of biological role, catalyzes the condensation of ATP and 5-phosphoribose 1-diphosphate to form N'-(5'-phosphoribosyl)-ATP (PR-ATP). Has a crucial role in the pathway because the rate of histidine biosynthesis seems to be controlled primarily by regulation of HisG enzymatic activity. This chain is ATP phosphoribosyltransferase, found in Hydrogenobaculum sp. (strain Y04AAS1).